The sequence spans 210 residues: Thymidylate kinase (210 aa).

11–18 (GLEGAGKS) is a binding site for ATP.

The protein belongs to the thymidylate kinase family.

It catalyses the reaction dTMP + ATP = dTDP + ADP. Functionally, phosphorylation of dTMP to form dTDP in both de novo and salvage pathways of dTTP synthesis. In Histophilus somni (strain 2336) (Haemophilus somnus), this protein is Thymidylate kinase.